The following is a 384-amino-acid chain: Probable circularly permuted 1,3-beta-glucanase PGA52 (384 aa).

The signal sequence occupies residues 1 to 17; sequence MLFSSLLVSTLVSVATA. Asn-118, Asn-128, Asn-170, Asn-210, and Asn-244 each carry an N-linked (GlcNAc...) asparagine glycan. The ExDxxE motif signature appears at 254 to 259; sequence EFDIFE. N-linked (GlcNAc...) asparagine glycosylation is found at Asn-262 and Asn-318. Ser-361 carries the GPI-anchor amidated serine lipid modification. Residues 362–384 constitute a propeptide, removed in mature form; the sequence is GGVSYQPSFITNLLMTVLTLWVI.

It belongs to the PGA52 family.

It is found in the cell membrane. It catalyses the reaction Hydrolysis of (1-&gt;3)-beta-D-glucosidic linkages in (1-&gt;3)-beta-D-glucans.. In terms of biological role, probable circularly permuted 1,3-beta-glucanase involved in cell wall modification through beta-1,3-glucan network alterations such as increased branching or remodeling. The polypeptide is Probable circularly permuted 1,3-beta-glucanase PGA52 (PGA52) (Candida albicans (strain SC5314 / ATCC MYA-2876) (Yeast)).